The following is a 128-amino-acid chain: Large ribosomal subunit protein bL17 (128 aa).

It belongs to the bacterial ribosomal protein bL17 family. As to quaternary structure, part of the 50S ribosomal subunit. Contacts protein L32.

This Klebsiella pneumoniae (strain 342) protein is Large ribosomal subunit protein bL17.